The following is a 428-amino-acid chain: Oxysterol-binding protein 9 (428 aa).

Residues 1–11 show a composition bias toward polar residues; the sequence is MTEVQSITTSG. Disordered regions lie at residues 1–32 and 396–428; these read MTEV…STTN and ALIE…KNQK. The span at 18-32 shows a compositional bias: low complexity; sequence SPSSSSSSISSSTTN. Positions 389–422 form a coiled coil; sequence EEAKKYKALIEDNQRKQKKEKDEKLKKDEKLKKE.

The protein belongs to the OSBP family.

The protein is Oxysterol-binding protein 9 (osbI) of Dictyostelium discoideum (Social amoeba).